The primary structure comprises 552 residues: Gamma-aminobutyric acid receptor subunit alpha-4 (552 aa).

A signal peptide spans 1-35; it reads MVSVQKVPAIALCSGVSLALLHFLCLAACLNESPG. At 36–259 the chain is on the extracellular side; it reads QNSKDEKLCP…FHLRRKMGYF (224 aa). Residue Asn-47 is glycosylated (N-linked (GlcNAc...) asparagine). 4-aminobutanoate is bound at residue Arg-100. Asn-144 and Asn-157 each carry an N-linked (GlcNAc...) asparagine glycan. Thr-163 is a 4-aminobutanoate binding site. Cys-172 and Cys-186 are disulfide-bonded. A helical transmembrane segment spans residues 260–280; that stretch reads MIQTYIPCIMTVILSQVSFWI. The Cytoplasmic segment spans residues 281–284; it reads NKES. Residues 285–305 traverse the membrane as a helical segment; sequence VPARTVFGITTVLTMTTLSIS. At 306-318 the chain is on the extracellular side; it reads ARHSLPKVSYATA. The helical transmembrane segment at 319–341 threads the bilayer; it reads MDWFIAVCFAFVFSALIEFAAVN. Residues 342 to 515 lie on the Cytoplasmic side of the membrane; sequence YFTNIQMQKA…PPPSGSGTSK (174 aa). 2 disordered regions span residues 353-480 and 492-513; these read KKIS…FGSR and GAAGNVSATPPPPAPPPSGSGT. Basic and acidic residues predominate over residues 396-406; it reads SESDVKSRTEV. The span at 407–422 shows a compositional bias: polar residues; it reads GNHSSKTSAVQESSEA. Low complexity predominate over residues 445–458; that stretch reads SAAARGLSSAASPS. Pro residues predominate over residues 500 to 509; that stretch reads TPPPPAPPPS. A helical membrane pass occupies residues 516–538; it reads IDKYARILFPVTFGAFNMVYWVV. Residues 539–552 lie on the Extracellular side of the membrane; the sequence is YLSKDTMEKSESLM.

This sequence belongs to the ligand-gated ion channel (TC 1.A.9) family. Gamma-aminobutyric acid receptor (TC 1.A.9.5) subfamily. GABRA4 sub-subfamily. As to quaternary structure, heteropentamer, formed by a combination of alpha (GABRA1-6), beta (GABRB1-3), gamma (GABRG1-3), delta (GABRD), epsilon (GABRE), rho (GABRR1-3), pi (GABRP) and theta (GABRQ) chains, each subunit exhibiting distinct physiological and pharmacological properties. In terms of tissue distribution, expressed in the brain.

It localises to the cell membrane. The protein localises to the postsynaptic cell membrane. It catalyses the reaction chloride(in) = chloride(out). Its activity is regulated as follows. Potentiated by gaboxadol. Potentiated by histamine. In terms of biological role, alpha subunit of the heteropentameric ligand-gated chloride channel gated by gamma-aminobutyric acid (GABA), a major inhibitory neurotransmitter in the brain. GABA-gated chloride channels, also named GABA(A) receptors (GABAAR), consist of five subunits arranged around a central pore and contain GABA active binding site(s) located at the alpha and beta subunit interface(s). Alpha-4/GABRA4 subunit often assembles with delta or gamma-2 subunits, in combination with beta subunits. When activated by GABA, GABAARs selectively allow the flow of chloride anions across the cell membrane down their electrochemical gradient. GABAARs containing alpha-4 are predominantly extrasynaptic, contributing to tonic inhibition in dentate granule cells and thalamic relay neurons. Extrasynaptic alpha-4-containing GABAARs control levels of excitability and network activity. GABAAR containing alpha-4-beta-3-delta subunits can simultaneously bind GABA and histamine where histamine binds at the interface of two neighboring beta subunits, which may be involved in the regulation of sleep and wakefulness. The polypeptide is Gamma-aminobutyric acid receptor subunit alpha-4 (Mus musculus (Mouse)).